The chain runs to 606 residues: 4-hydroxy-3-methylbut-2-en-1-yl diphosphate synthase (flavodoxin) (606 aa).

[4Fe-4S] cluster contacts are provided by Cys513, Cys516, Cys547, and Glu554.

This sequence belongs to the IspG family. Requires [4Fe-4S] cluster as cofactor.

The catalysed reaction is (2E)-4-hydroxy-3-methylbut-2-enyl diphosphate + oxidized [flavodoxin] + H2O + 2 H(+) = 2-C-methyl-D-erythritol 2,4-cyclic diphosphate + reduced [flavodoxin]. The protein operates within isoprenoid biosynthesis; isopentenyl diphosphate biosynthesis via DXP pathway; isopentenyl diphosphate from 1-deoxy-D-xylulose 5-phosphate: step 5/6. Functionally, converts 2C-methyl-D-erythritol 2,4-cyclodiphosphate (ME-2,4cPP) into 1-hydroxy-2-methyl-2-(E)-butenyl 4-diphosphate. In Chlamydia felis (strain Fe/C-56) (Chlamydophila felis), this protein is 4-hydroxy-3-methylbut-2-en-1-yl diphosphate synthase (flavodoxin).